A 563-amino-acid chain; its full sequence is Endoglucanase B (563 aa).

The segment at residues methionine 1 to alanine 27 is a signal peptide (or 31). Catalysis depends on glutamate 204, which acts as the Proton donor. Glutamate 363 functions as the Nucleophile in the catalytic mechanism. The interval serine 476–threonine 495 is disordered. One can recognise a Dockerin domain in the interval aspartate 496 to tyrosine 562.

The protein belongs to the glycosyl hydrolase 5 (cellulase A) family.

It catalyses the reaction Endohydrolysis of (1-&gt;4)-beta-D-glucosidic linkages in cellulose, lichenin and cereal beta-D-glucans.. Functionally, this enzyme catalyzes the endohydrolysis of 1,4-beta-glucosidic linkages in cellulose, lichenin and cereal beta-D-glucans. The sequence is that of Endoglucanase B (celB) from Acetivibrio thermocellus (strain ATCC 27405 / DSM 1237 / JCM 9322 / NBRC 103400 / NCIMB 10682 / NRRL B-4536 / VPI 7372) (Clostridium thermocellum).